We begin with the raw amino-acid sequence, 152 residues long: Transcriptional regulator MraZ (152 aa).

SpoVT-AbrB domains follow at residues 5–52 (ATLV…PLPE) and 81–124 (ASEC…DETT).

This sequence belongs to the MraZ family. Forms oligomers.

It localises to the cytoplasm. The protein resides in the nucleoid. In terms of biological role, negatively regulates its own expression and that of the subsequent genes in the proximal part of the division and cell wall (dcw) gene cluster. Acts by binding directly to DNA. May also regulate the expression of genes outside the dcw cluster. This Salmonella gallinarum (strain 287/91 / NCTC 13346) protein is Transcriptional regulator MraZ.